The primary structure comprises 107 residues: Thiosulfate sulfurtransferase GlpE (107 aa).

The Rhodanese domain occupies 17–101; sequence AAGAARLVDI…GFEAWRREFP (85 aa). The Cysteine persulfide intermediate role is filled by cysteine 65.

The protein belongs to the GlpE family.

Its subcellular location is the cytoplasm. The enzyme catalyses thiosulfate + hydrogen cyanide = thiocyanate + sulfite + 2 H(+). It carries out the reaction thiosulfate + [thioredoxin]-dithiol = [thioredoxin]-disulfide + hydrogen sulfide + sulfite + 2 H(+). Functionally, transferase that catalyzes the transfer of sulfur from thiosulfate to thiophilic acceptors such as cyanide or dithiols. May function in a CysM-independent thiosulfate assimilation pathway by catalyzing the conversion of thiosulfate to sulfite, which can then be used for L-cysteine biosynthesis. The sequence is that of Thiosulfate sulfurtransferase GlpE from Aeromonas hydrophila subsp. hydrophila (strain ATCC 7966 / DSM 30187 / BCRC 13018 / CCUG 14551 / JCM 1027 / KCTC 2358 / NCIMB 9240 / NCTC 8049).